A 367-amino-acid polypeptide reads, in one-letter code: 5-amino-6-(D-ribitylamino)uracil--L-tyrosine 4-hydroxyphenyl transferase (367 aa).

The region spanning 54–288 is the Radical SAM core domain; that stretch reads ITYIENWNIN…VYAISRLMFR (235 aa). Residues Cys-68, Cys-72, and Cys-75 each coordinate [4Fe-4S] cluster.

The protein belongs to the radical SAM superfamily. CofH family. In terms of assembly, consists of two subunits, CofG and CofH. Requires [4Fe-4S] cluster as cofactor.

The catalysed reaction is 5-amino-6-(D-ribitylamino)uracil + L-tyrosine + S-adenosyl-L-methionine = 5-amino-5-(4-hydroxybenzyl)-6-(D-ribitylimino)-5,6-dihydrouracil + 2-iminoacetate + 5'-deoxyadenosine + L-methionine + H(+). It functions in the pathway cofactor biosynthesis; coenzyme F0 biosynthesis. Its function is as follows. Catalyzes the radical-mediated synthesis of 5-amino-5-(4-hydroxybenzyl)-6-(D-ribitylimino)-5,6-dihydrouracil from 5-amino-6-(D-ribitylamino)uracil and L-tyrosine. This chain is 5-amino-6-(D-ribitylamino)uracil--L-tyrosine 4-hydroxyphenyl transferase, found in Methanothermobacter thermautotrophicus (strain ATCC 29096 / DSM 1053 / JCM 10044 / NBRC 100330 / Delta H) (Methanobacterium thermoautotrophicum).